We begin with the raw amino-acid sequence, 173 residues long: Crossover junction endodeoxyribonuclease RuvC (173 aa).

Catalysis depends on residues Asp8, Glu67, and Asp139. Positions 8, 67, and 139 each coordinate Mg(2+).

Belongs to the RuvC family. As to quaternary structure, homodimer which binds Holliday junction (HJ) DNA. The HJ becomes 2-fold symmetrical on binding to RuvC with unstacked arms; it has a different conformation from HJ DNA in complex with RuvA. In the full resolvosome a probable DNA-RuvA(4)-RuvB(12)-RuvC(2) complex forms which resolves the HJ. Requires Mg(2+) as cofactor.

The protein resides in the cytoplasm. It carries out the reaction Endonucleolytic cleavage at a junction such as a reciprocal single-stranded crossover between two homologous DNA duplexes (Holliday junction).. In terms of biological role, the RuvA-RuvB-RuvC complex processes Holliday junction (HJ) DNA during genetic recombination and DNA repair. Endonuclease that resolves HJ intermediates. Cleaves cruciform DNA by making single-stranded nicks across the HJ at symmetrical positions within the homologous arms, yielding a 5'-phosphate and a 3'-hydroxyl group; requires a central core of homology in the junction. The consensus cleavage sequence is 5'-(A/T)TT(C/G)-3'. Cleavage occurs on the 3'-side of the TT dinucleotide at the point of strand exchange. HJ branch migration catalyzed by RuvA-RuvB allows RuvC to scan DNA until it finds its consensus sequence, where it cleaves and resolves the cruciform DNA. In Shewanella loihica (strain ATCC BAA-1088 / PV-4), this protein is Crossover junction endodeoxyribonuclease RuvC.